The primary structure comprises 319 residues: Transcription factor bHLH111 (319 aa).

A disordered region spans residues 1–23 (MDHHHHIASRNSSTTSELPSFEP). The span at 9–18 (SRNSSTTSEL) shows a compositional bias: polar residues. The bHLH domain occupies 195-244 (SEGSTLSPEKELPKAKLRDKITTLQQIVSPFGKTDTASVLQEAITYINFY).

Homodimer.

Its subcellular location is the nucleus. This chain is Transcription factor bHLH111 (BHLH111), found in Arabidopsis thaliana (Mouse-ear cress).